The following is a 154-amino-acid chain: Ribonuclease P protein subunit p21 (154 aa).

Ala-2 carries the N-acetylalanine modification. Zn(2+) is bound by residues Cys-62, Cys-65, Cys-92, and Cys-95. The tract at residues 117-154 (QLGSQADSKPLQPLPNTAHSISDRLPEEKMQTQGSSNQ) is disordered. Residues 137–146 (ISDRLPEEKM) are compositionally biased toward basic and acidic residues.

Belongs to the eukaryotic/archaeal RNase P protein component 4 family. In terms of assembly, RNase P consists of a catalytic RNA moiety and about 10 protein subunits; POP1, POP4, POP5, POP7, RPP14, RPP21, RPP25, RPP30, RPP38 and RPP40. Within the RNase P complex, POP1, POP7 and RPP25 form the 'finger' subcomplex, POP5, RPP14, RPP40 and homodimeric RPP30 form the 'palm' subcomplex, and RPP21, POP4 and RPP38 form the 'wrist' subcomplex. All subunits of the RNase P complex interact with the catalytic RNA.

Its subcellular location is the nucleus. The protein resides in the nucleolus. Its function is as follows. Component of ribonuclease P, a ribonucleoprotein complex that generates mature tRNA molecules by cleaving their 5'-ends. The sequence is that of Ribonuclease P protein subunit p21 (RPP21) from Homo sapiens (Human).